The following is a 222-amino-acid chain: Octanoyltransferase (222 aa).

The region spanning 34–214 is the BPL/LPL catalytic domain; it reads GEKNSTVLIL…EFSKHDEALV (181 aa). Substrate is bound by residues 72–79, 144–146, and 157–159; these read RGGKLTWH, AIG, and GVA. Cysteine 175 functions as the Acyl-thioester intermediate in the catalytic mechanism.

Belongs to the LipB family.

Its subcellular location is the cytoplasm. It carries out the reaction octanoyl-[ACP] + L-lysyl-[protein] = N(6)-octanoyl-L-lysyl-[protein] + holo-[ACP] + H(+). It participates in protein modification; protein lipoylation via endogenous pathway; protein N(6)-(lipoyl)lysine from octanoyl-[acyl-carrier-protein]: step 1/2. In terms of biological role, catalyzes the transfer of endogenously produced octanoic acid from octanoyl-acyl-carrier-protein onto the lipoyl domains of lipoate-dependent enzymes. Lipoyl-ACP can also act as a substrate although octanoyl-ACP is likely to be the physiological substrate. This chain is Octanoyltransferase, found in Paenarthrobacter aurescens (strain TC1).